The chain runs to 440 residues: Homocitrate synthase, mitochondrial (440 aa).

Polar residues predominate over residues Met-1–Tyr-23. Residues Met-1–Pro-27 form a disordered region. The region spanning Phe-37 to Arg-290 is the Pyruvate carboxyltransferase domain. Residue Arg-45 coordinates 2-oxoglutarate. Glu-46 provides a ligand contact to Mg(2+). Positions 105, 165, and 199 each coordinate 2-oxoglutarate. Positions 226 and 228 each coordinate Mg(2+). Catalysis depends on His-323, which acts as the Proton acceptor. Ser-399 carries the phosphoserine modification. Position 410 is a phosphothreonine (Thr-410).

This sequence belongs to the alpha-IPM synthase/homocitrate synthase family. Homocitrate synthase LYS20/LYS21 subfamily. It depends on Mg(2+) as a cofactor. The cofactor is Mn(2+).

The protein localises to the mitochondrion. The catalysed reaction is acetyl-CoA + 2-oxoglutarate + H2O = (2R)-homocitrate + CoA + H(+). It functions in the pathway amino-acid biosynthesis; L-lysine biosynthesis via AAA pathway; L-alpha-aminoadipate from 2-oxoglutarate: step 1/5. Functionally, catalyzes the aldol-type condensation of 2-oxoglutarate with acetyl-CoA to yield homocitrate. Carries out the first step of the alpha-aminoadipate (AAA) lysine biosynthesis pathway. The protein is Homocitrate synthase, mitochondrial (LYS21) of Saccharomyces cerevisiae (strain ATCC 204508 / S288c) (Baker's yeast).